The primary structure comprises 385 residues: Probable di-N-acetylchitobiase 2 (385 aa).

Residues 1–15 (MRIILLLFLIVFVVA) form the signal peptide. The GH18 domain occupies 16 to 377 (QSSSSSSSSG…DALASFFPQS (362 aa)). Asn-51 and Asn-101 each carry an N-linked (GlcNAc...) asparagine glycan. Glu-129 (proton donor) is an active-site residue. N-linked (GlcNAc...) asparagine glycans are attached at residues Asn-223, Asn-272, and Asn-296.

Belongs to the glycosyl hydrolase 18 family.

It is found in the lysosome. Its function is as follows. Involved in the degradation of asparagine-linked glycoproteins. May hydrolyze of N-acetyl-beta-D-glucosamine (1-4)N-acetylglucosamine chitobiose core from the reducing end of the bond. This is Probable di-N-acetylchitobiase 2 (ctbs2) from Dictyostelium discoideum (Social amoeba).